A 388-amino-acid polypeptide reads, in one-letter code: Cell adhesion molecule 4 (388 aa).

The signal sequence occupies residues M1 to G20. Positions P21–T119 constitute an Ig-like V-type domain. Topologically, residues Q25 to A324 are extracellular. N-linked (GlcNAc...) asparagine glycosylation is found at N31 and N67. Disulfide bonds link C44–C104, C145–C199, and C245–C291. Ig-like C2-type domains lie at P124–D219 and P224–V307. The N-linked (GlcNAc...) asparagine glycan is linked to N286. The helical transmembrane segment at I325 to V345 threads the bilayer. The Cytoplasmic portion of the chain corresponds to W346–I388. Residue S361 is modified to Phosphoserine.

Belongs to the nectin family. As to quaternary structure, monomer and homodimer. In terms of processing, N-glycosylated. Expressed in the brain and several organs including the kidney and liver.

It is found in the membrane. In terms of biological role, involved in the cell-cell adhesion. Has calcium- and magnesium-independent cell-cell adhesion activity. May have tumor-suppressor activity. This chain is Cell adhesion molecule 4 (Cadm4), found in Mus musculus (Mouse).